The following is a 115-amino-acid chain: Ribonuclease P protein component (115 aa).

The protein belongs to the RnpA family. As to quaternary structure, consists of a catalytic RNA component (M1 or rnpB) and a protein subunit.

The enzyme catalyses Endonucleolytic cleavage of RNA, removing 5'-extranucleotides from tRNA precursor.. Its function is as follows. RNaseP catalyzes the removal of the 5'-leader sequence from pre-tRNA to produce the mature 5'-terminus. It can also cleave other RNA substrates such as 4.5S RNA. The protein component plays an auxiliary but essential role in vivo by binding to the 5'-leader sequence and broadening the substrate specificity of the ribozyme. In Macrococcus caseolyticus (strain JCSC5402) (Macrococcoides caseolyticum), this protein is Ribonuclease P protein component.